The sequence spans 197 residues: Proteasome subunit beta 1 (197 aa).

The propeptide at Met-1–Gly-6 is removed in mature form; by autocatalysis. Thr-7 functions as the Nucleophile in the catalytic mechanism.

Belongs to the peptidase T1B family. As to quaternary structure, the 20S proteasome core is composed of 14 alpha and 14 beta subunits that assemble into four stacked heptameric rings, resulting in a barrel-shaped structure. The two inner rings, each composed of seven catalytic beta subunits, are sandwiched by two outer rings, each composed of seven alpha subunits. The catalytic chamber with the active sites is on the inside of the barrel. Has a gated structure, the ends of the cylinder being occluded by the N-termini of the alpha-subunits. Is capped at one or both ends by the proteasome regulatory ATPase, PAN.

The protein localises to the cytoplasm. It carries out the reaction Cleavage of peptide bonds with very broad specificity.. With respect to regulation, the formation of the proteasomal ATPase PAN-20S proteasome complex, via the docking of the C-termini of PAN into the intersubunit pockets in the alpha-rings, triggers opening of the gate for substrate entry. Interconversion between the open-gate and close-gate conformations leads to a dynamic regulation of the 20S proteasome proteolysis activity. Its function is as follows. Component of the proteasome core, a large protease complex with broad specificity involved in protein degradation. In Pyrococcus abyssi (strain GE5 / Orsay), this protein is Proteasome subunit beta 1.